Consider the following 279-residue polypeptide: Peptide deformylase 1B, chloroplastic (279 aa).

Residues Cys177 and His219 each contribute to the Fe cation site. Residue Glu220 is part of the active site. His223 contributes to the Fe cation binding site.

Belongs to the polypeptide deformylase family. It depends on Fe(2+) as a cofactor.

It is found in the plastid. The protein resides in the chloroplast. The enzyme catalyses N-terminal N-formyl-L-methionyl-[peptide] + H2O = N-terminal L-methionyl-[peptide] + formate. Functionally, removes the formyl group from the N-terminal Met of newly synthesized proteins. The protein is Peptide deformylase 1B, chloroplastic (PDF1B) of Solanum lycopersicum (Tomato).